A 492-amino-acid chain; its full sequence is Sestrin-3 (492 aa).

The segment at 62 to 243 is N-terminal domain; may mediate the alkylhydroperoxide reductase activity; it reads LVEEYSTSGR…VCDLANDNSI (182 aa). The Cysteine sulfenic acid (-SOH) intermediate role is filled by cysteine 121. The segment at 310-492 is C-terminal domain; mediates TORC1 regulation; the sequence is PHSDFEDDVI…ALRAITRHLT (183 aa). Residues 386 to 389, threonine 398, and glutamate 463 each bind L-leucine; that span reads TYNT.

It belongs to the sestrin family. As to quaternary structure, interacts with the GATOR2 complex which is composed of MIOS, SEC13, SEH1L, WDR24 and WDR59; the interaction is not regulated by leucine. Interacts with RRAGA, RRAGB, RRAGC and RRAGD; may function as a guanine nucleotide dissociation inhibitor for RRAGs and regulate them. Interacts with the TORC2 complex; through RICTOR. As to expression, detected in liver and skeletal muscles.

The protein localises to the cytoplasm. The enzyme catalyses a hydroperoxide + L-cysteinyl-[protein] = S-hydroxy-L-cysteinyl-[protein] + an alcohol. Functionally, may function as an intracellular leucine sensor that negatively regulates the TORC1 signaling pathway. May also regulate the insulin-receptor signaling pathway through activation of TORC2. This metabolic regulator may also play a role in protection against oxidative and genotoxic stresses. May prevent the accumulation of reactive oxygen species (ROS) through the alkylhydroperoxide reductase activity born by the N-terminal domain of the protein. The protein is Sestrin-3 of Mus musculus (Mouse).